A 137-amino-acid chain; its full sequence is Small ribosomal subunit protein uS12 (137 aa).

Disordered regions lie at residues 1–21 (MPTINQLVRKPRKSKIEKSDS) and 34–57 (VHTKLAAPQKRGVATRVGTMTPKK). D102 carries the 3-methylthioaspartic acid modification.

Belongs to the universal ribosomal protein uS12 family. In terms of assembly, part of the 30S ribosomal subunit. Contacts proteins S8 and S17. May interact with IF1 in the 30S initiation complex.

In terms of biological role, with S4 and S5 plays an important role in translational accuracy. Interacts with and stabilizes bases of the 16S rRNA that are involved in tRNA selection in the A site and with the mRNA backbone. Located at the interface of the 30S and 50S subunits, it traverses the body of the 30S subunit contacting proteins on the other side and probably holding the rRNA structure together. The combined cluster of proteins S8, S12 and S17 appears to hold together the shoulder and platform of the 30S subunit. The chain is Small ribosomal subunit protein uS12 from Streptococcus equi subsp. zooepidemicus (strain H70).